We begin with the raw amino-acid sequence, 299 residues long: ATP phosphoribosyltransferase (299 aa).

It belongs to the ATP phosphoribosyltransferase family. Long subfamily. Mg(2+) serves as cofactor.

The protein localises to the cytoplasm. The catalysed reaction is 1-(5-phospho-beta-D-ribosyl)-ATP + diphosphate = 5-phospho-alpha-D-ribose 1-diphosphate + ATP. The protein operates within amino-acid biosynthesis; L-histidine biosynthesis; L-histidine from 5-phospho-alpha-D-ribose 1-diphosphate: step 1/9. Feedback inhibited by histidine. Functionally, catalyzes the condensation of ATP and 5-phosphoribose 1-diphosphate to form N'-(5'-phosphoribosyl)-ATP (PR-ATP). Has a crucial role in the pathway because the rate of histidine biosynthesis seems to be controlled primarily by regulation of HisG enzymatic activity. The sequence is that of ATP phosphoribosyltransferase from Shewanella baltica (strain OS155 / ATCC BAA-1091).